The chain runs to 175 residues: Avenin-like a7 (175 aa).

Positions 1-19 are cleaved as a signal peptide; the sequence is MKTMFILALLAFTATSAVA.

Belongs to the prolamin family. Contains 7 disulfide bonds.

Seed storage protein. Not integrated in the gluten polymer through disulfide bonds, unless incorporated by reduction and reoxidation during dough making. Increases dough strength and bread volume, but decreases dough stability when added into a base wheat flour. The sequence is that of Avenin-like a7 from Triticum aestivum (Wheat).